The following is a 38-amino-acid chain: Histidine decarboxylase small chain (38 aa).

As to quaternary structure, heterohexamer of 3 large and 3 small chains. The cofactor is pyruvate.

The enzyme catalyses L-histidine + H(+) = histamine + CO2. The polypeptide is Histidine decarboxylase small chain (Micrococcus sp).